Here is a 458-residue protein sequence, read N- to C-terminus: BPI fold-containing family B member 2 (458 aa).

Positions Met1–Ala20 are cleaved as a signal peptide. Thr52 carries the phosphothreonine; by FAM20C modification. Ser60 is subject to Phosphoserine; by FAM20C. 4 N-linked (GlcNAc...) asparagine glycosylation sites follow: Asn96, Asn151, Asn293, and Asn332. An intrachain disulfide couples Cys137 to Cys174.

It belongs to the BPI/LBP/Plunc superfamily. BPI/LBP family. In terms of tissue distribution, highly expressed in tonsils, especially in hypertrophic tonsils. Detected at very low levels in fetal liver.

The protein resides in the secreted. The sequence is that of BPI fold-containing family B member 2 (BPIFB2) from Homo sapiens (Human).